Here is a 232-residue protein sequence, read N- to C-terminus: Glycerol-3-phosphate acyltransferase (232 aa).

6 helical membrane-spanning segments follow: residues 4–24, 56–76, 90–110, 124–144, 152–172, and 191–211; these read FLAI…IIAG, VVTL…VGFF, IALS…TVFA, MLIG…LLAV, VGSI…KYVF, and SLDY…IYTH.

This sequence belongs to the PlsY family. In terms of assembly, probably interacts with PlsX.

It is found in the cell inner membrane. The catalysed reaction is an acyl phosphate + sn-glycerol 3-phosphate = a 1-acyl-sn-glycero-3-phosphate + phosphate. The protein operates within lipid metabolism; phospholipid metabolism. Functionally, catalyzes the transfer of an acyl group from acyl-phosphate (acyl-PO(4)) to glycerol-3-phosphate (G3P) to form lysophosphatidic acid (LPA). This enzyme utilizes acyl-phosphate as fatty acyl donor, but not acyl-CoA or acyl-ACP. The polypeptide is Glycerol-3-phosphate acyltransferase (Chlorobaculum tepidum (strain ATCC 49652 / DSM 12025 / NBRC 103806 / TLS) (Chlorobium tepidum)).